Here is a 37-residue protein sequence, read N- to C-terminus: Large ribosomal subunit protein bL36c (37 aa).

The protein belongs to the bacterial ribosomal protein bL36 family.

Its subcellular location is the plastid. It localises to the chloroplast. The sequence is that of Large ribosomal subunit protein bL36c from Chara vulgaris (Common stonewort).